Consider the following 437-residue polypeptide: tRNA-queuosine alpha-mannosyltransferase (437 aa).

It belongs to the glycosyltransferase group 1 family. Glycosyltransferase 4 subfamily.

The protein resides in the cytoplasm. It is found in the nucleus. It catalyses the reaction queuosine(34) in tRNA(Asp) + GDP-alpha-D-mannose = O-4''-alpha-D-mannosylqueuosine(34) in tRNA(Asp) + GDP + H(+). Its function is as follows. Glycosyltransferase that specifically catalyzes mannosylation of cytoplasmic tRNA(Asp) modified with queuosine at position 34 (queuosine(34)). Mannosylates the cyclopentene moiety of queuosine(34) in tRNA(Asp) to form mannosyl-queuosine(34). Mannosylation of queuosine(34) in tRNA(Asp) is required to slow-down elongation at cognate codons, GAC and GAU, thereby regulating protein translation. This Xenopus tropicalis (Western clawed frog) protein is tRNA-queuosine alpha-mannosyltransferase (gtdc1).